Here is a 436-residue protein sequence, read N- to C-terminus: Cyclin-A2-2 (436 aa).

This sequence belongs to the cyclin family. Cyclin AB subfamily. In terms of tissue distribution, expressed in roots, stems, leaves, flowers and siliques.

The polypeptide is Cyclin-A2-2 (CYCA2-2) (Arabidopsis thaliana (Mouse-ear cress)).